We begin with the raw amino-acid sequence, 200 residues long: Max dimerization protein 3 (200 aa).

Disordered regions lie at residues 26-56 and 134-164; these read EHGY…DNVR and LLPP…QEDL. In terms of domain architecture, bHLH spans 54-106; the sequence is NVRSVHNELEKHRRAQLRRCLEQLKQQVPLSMENSRHTTLSLLHRAKQHIKKL.

Efficient DNA binding requires dimerization with another bHLH protein. Binds DNA as a heterodimer with MAX.

It is found in the nucleus. In terms of biological role, transcriptional repressor. Binds with MAX to form a sequence-specific DNA-binding protein complex which recognizes the core sequence 5'-CAC[GA]TG-3'. In Xenopus tropicalis (Western clawed frog), this protein is Max dimerization protein 3 (mxd3).